A 506-amino-acid chain; its full sequence is Aminoaldehyde dehydrogenase 1b (506 aa).

Residue aspartate 102 participates in Na(+) binding. NAD(+) contacts are provided by residues 162-164 (TPW) and 188-191 (KPSE). Leucine 192 serves as a coordination point for Na(+). Residues 242-245 (SFET) and glutamate 263 contribute to the NAD(+) site. The active-site Proton acceptor is the glutamate 263. Cysteine 297 functions as the Nucleophile in the catalytic mechanism. NAD(+)-binding residues include glutamate 396 and tryptophan 462.

Belongs to the aldehyde dehydrogenase family.

The catalysed reaction is 4-aminobutanal + NAD(+) + H2O = 4-aminobutanoate + NADH + 2 H(+). The enzyme catalyses 3-aminopropanal + NAD(+) + H2O = beta-alanine + NADH + 2 H(+). It carries out the reaction 4-(trimethylamino)butanal + NAD(+) + H2O = 4-(trimethylamino)butanoate + NADH + 2 H(+). It catalyses the reaction 4-guanidinobutanal + NAD(+) + H2O = 4-guanidinobutanoate + NADH + 2 H(+). The catalysed reaction is betaine aldehyde + NAD(+) + H2O = glycine betaine + NADH + 2 H(+). Its pathway is amine and polyamine biosynthesis; betaine biosynthesis via choline pathway; betaine from betaine aldehyde: step 1/1. Functionally, dehydrogenase that catalyzes the oxidation of several aminoaldehydes. Metabolizes and detoxifies aldehyde products of polyamine degradation to non-toxic amino acids. Catalyzes the oxidation of 4-aminobutanal and 3-aminopropanal to 4-aminobutanoate and beta-alanine, respectively. Catalyzes the oxidation of 4-(trimethylamino)butanal and 4-guanidinobutanal to 4-trimethylammoniobutanoate and 4-guanidinobutanoate, respectively. Catalyzes the oxidation of betaine aldehyde to glycine betaine. In Zea mays (Maize), this protein is Aminoaldehyde dehydrogenase 1b.